A 282-amino-acid chain; its full sequence is Alpha/beta-gliadin A-III (282 aa).

The first 20 residues, 1-20 (MKTFLILALLAIVATTATSA), serve as a signal peptide directing secretion. Over residues 27–59 (QLQPQNPSQQQPQEQVPLMQQQQQFPGQQEQFP) the composition is skewed to low complexity. 2 disordered regions span residues 27 to 122 (QLQP…AQQQ) and 220 to 240 (SGQV…SVQP). The segment covering 60–111 (PQQPYPHQQPFPSQQPYPQPQPFPPQLPYPQTQPFPPQQPYPQPQPQYPQPQ) has biased composition (pro residues). The span at 112–122 (QPISQQQAQQQ) shows a compositional bias: low complexity. A compositionally biased stretch (polar residues) spans 224 to 240 (SFQSSQQNPQAQGSVQP).

Belongs to the gliadin/glutenin family. Post-translationally, substrate of transglutaminase.

Gliadin is the major seed storage protein in wheat. In Triticum aestivum (Wheat), this protein is Alpha/beta-gliadin A-III.